The following is a 248-amino-acid chain: 2,3-bisphosphoglycerate-dependent phosphoglycerate mutase (248 aa).

Substrate is bound by residues 8–15 (RHGESTWN), 21–22 (TG), R60, 87–90 (ERHY), K98, and 114–115 (RR). The active-site Tele-phosphohistidine intermediate is H9. Residue E87 is the Proton donor/acceptor of the active site. The disordered stretch occupies residues 117-137 (YDTPPPALEPTDPRASYDDPR). Positions 127 to 137 (TDPRASYDDPR) are enriched in basic and acidic residues. 183-184 (GN) is a substrate binding site.

It belongs to the phosphoglycerate mutase family. BPG-dependent PGAM subfamily. In terms of assembly, homodimer.

The catalysed reaction is (2R)-2-phosphoglycerate = (2R)-3-phosphoglycerate. Its pathway is carbohydrate degradation; glycolysis; pyruvate from D-glyceraldehyde 3-phosphate: step 3/5. In terms of biological role, catalyzes the interconversion of 2-phosphoglycerate and 3-phosphoglycerate. In Cupriavidus taiwanensis (strain DSM 17343 / BCRC 17206 / CCUG 44338 / CIP 107171 / LMG 19424 / R1) (Ralstonia taiwanensis (strain LMG 19424)), this protein is 2,3-bisphosphoglycerate-dependent phosphoglycerate mutase.